A 748-amino-acid chain; its full sequence is EF-hand domain-containing family member C2 (748 aa).

DM10 domains lie at D75–G182, D226–Y366, and V428–A535. EF-hand domains are found at residues E556–E591 and E631–P666.

It is found in the cytoplasm. It localises to the cytoskeleton. The protein resides in the cilium axoneme. Microtubule inner protein (MIP) part of the dynein-decorated doublet microtubules (DMTs) in cilia axoneme, which is required for motile cilia beating. In Danio rerio (Zebrafish), this protein is EF-hand domain-containing family member C2 (efhc2).